Reading from the N-terminus, the 526-residue chain is Sterol 14-alpha demethylase CYP51A (526 aa).

Residues 27 to 47 (IGFAVFLVLSVVLNVLNQLLF) form a helical membrane-spanning segment. Tyrosine 123 is a lanosterol binding site. Residue cysteine 470 participates in heme binding.

This sequence belongs to the cytochrome P450 family. Heme is required as a cofactor.

The protein localises to the endoplasmic reticulum membrane. The enzyme catalyses a 14alpha-methyl steroid + 3 reduced [NADPH--hemoprotein reductase] + 3 O2 = a Delta(14) steroid + formate + 3 oxidized [NADPH--hemoprotein reductase] + 4 H2O + 4 H(+). The catalysed reaction is a 14alpha-methyl steroid + reduced [NADPH--hemoprotein reductase] + O2 = a 14alpha-hydroxymethyl steroid + oxidized [NADPH--hemoprotein reductase] + H2O + H(+). It catalyses the reaction a 14alpha-hydroxymethyl steroid + reduced [NADPH--hemoprotein reductase] + O2 = a 14alpha-formyl steroid + oxidized [NADPH--hemoprotein reductase] + 2 H2O + H(+). It carries out the reaction a 14alpha-formyl steroid + reduced [NADPH--hemoprotein reductase] + O2 = a Delta(14) steroid + formate + oxidized [NADPH--hemoprotein reductase] + H2O + 2 H(+). The enzyme catalyses lanosterol + 3 reduced [NADPH--hemoprotein reductase] + 3 O2 = 4,4-dimethyl-5alpha-cholesta-8,14,24-trien-3beta-ol + formate + 3 oxidized [NADPH--hemoprotein reductase] + 4 H2O + 4 H(+). The catalysed reaction is lanosterol + reduced [NADPH--hemoprotein reductase] + O2 = 32-hydroxylanosterol + oxidized [NADPH--hemoprotein reductase] + H2O + H(+). It catalyses the reaction 32-hydroxylanosterol + reduced [NADPH--hemoprotein reductase] + O2 = 32-oxolanosterol + oxidized [NADPH--hemoprotein reductase] + 2 H2O + H(+). It carries out the reaction 32-oxolanosterol + reduced [NADPH--hemoprotein reductase] + O2 = 4,4-dimethyl-5alpha-cholesta-8,14,24-trien-3beta-ol + formate + oxidized [NADPH--hemoprotein reductase] + H2O + 2 H(+). The enzyme catalyses eburicol + 3 reduced [NADPH--hemoprotein reductase] + 3 O2 = 14-demethyleburicol + formate + 3 oxidized [NADPH--hemoprotein reductase] + 4 H2O + 4 H(+). The catalysed reaction is eburicol + reduced [NADPH--hemoprotein reductase] + O2 = 32-hydroxyeburicol + oxidized [NADPH--hemoprotein reductase] + H2O + H(+). It catalyses the reaction 32-hydroxyeburicol + reduced [NADPH--hemoprotein reductase] + O2 = 32-oxoeburicol + oxidized [NADPH--hemoprotein reductase] + 2 H2O + H(+). It carries out the reaction 32-oxoeburicol + reduced [NADPH--hemoprotein reductase] + O2 = 14-demethyleburicol + formate + oxidized [NADPH--hemoprotein reductase] + H2O + 2 H(+). Its pathway is steroid metabolism; ergosterol biosynthesis. In terms of biological role, together with cyp51A and cyp51C, encodes the sterol 14alpha-demethylase that plays a critical role in the third module of ergosterol biosynthesis pathway, being ergosterol the major sterol component in fungal membranes that participates in a variety of functions. Essential for ascospore production. The third module or late pathway involves the ergosterol synthesis itself through consecutive reactions that mainly occur in the endoplasmic reticulum (ER) membrane. In filamentous fungi, during the initial step of this module, lanosterol (lanosta-8,24-dien-3beta-ol) can be metabolized to eburicol. Sterol 14alpha-demethylase catalyzes the three-step oxidative removal of the 14alpha-methyl group (C-32) of both these sterols in the form of formate, and converts eburicol and lanosterol to 14-demethyleburicol (4,4,24-trimethylergosta-8,14,24(28)-trienol) and 4,4-dimethyl-5alpha-cholesta-8,14,24-trien-3beta-ol, respectively, which are further metabolized by other enzymes in the pathway to ergosterol. Can also use substrates not intrinsic to fungi, such as 24,25-dihydrolanosterol (DHL), producing 4,4'-dimethyl-8,14-cholestadien-3-beta-ol, but at lower rates than the endogenous substrates. The polypeptide is Sterol 14-alpha demethylase CYP51A (Gibberella zeae (strain ATCC MYA-4620 / CBS 123657 / FGSC 9075 / NRRL 31084 / PH-1) (Wheat head blight fungus)).